The sequence spans 431 residues: Adenylosuccinate lyase (431 aa).

N(6)-(1,2-dicarboxyethyl)-AMP is bound by residues 4–5, 67–69, and 93–94; these read RY, RHD, and TS. Histidine 141 functions as the Proton donor/acceptor in the catalytic mechanism. Glutamine 212 is a binding site for N(6)-(1,2-dicarboxyethyl)-AMP. The active-site Proton donor/acceptor is the serine 262. N(6)-(1,2-dicarboxyethyl)-AMP contacts are provided by residues serine 263, 268 to 270, asparagine 276, and 307 to 311; these read KRN and SAERI.

Belongs to the lyase 1 family. Adenylosuccinate lyase subfamily. Homodimer and homotetramer. Residues from neighboring subunits contribute catalytic and substrate-binding residues to each active site.

It catalyses the reaction N(6)-(1,2-dicarboxyethyl)-AMP = fumarate + AMP. The enzyme catalyses (2S)-2-[5-amino-1-(5-phospho-beta-D-ribosyl)imidazole-4-carboxamido]succinate = 5-amino-1-(5-phospho-beta-D-ribosyl)imidazole-4-carboxamide + fumarate. Its pathway is purine metabolism; AMP biosynthesis via de novo pathway; AMP from IMP: step 2/2. The protein operates within purine metabolism; IMP biosynthesis via de novo pathway; 5-amino-1-(5-phospho-D-ribosyl)imidazole-4-carboxamide from 5-amino-1-(5-phospho-D-ribosyl)imidazole-4-carboxylate: step 2/2. In terms of biological role, catalyzes two reactions in de novo purine nucleotide biosynthesis. Catalyzes the breakdown of 5-aminoimidazole- (N-succinylocarboxamide) ribotide (SAICAR or 2-[5-amino-1-(5-phospho-beta-D-ribosyl)imidazole-4-carboxamido]succinate) to 5-aminoimidazole-4-carboxamide ribotide (AICAR or 5-amino-1-(5-phospho-beta-D-ribosyl)imidazole-4-carboxamide) and fumarate, and of adenylosuccinate (ADS or N(6)-(1,2-dicarboxyethyl)-AMP) to adenosine monophosphate (AMP) and fumarate. The protein is Adenylosuccinate lyase (purB) of Staphylococcus aureus (strain USA300).